The sequence spans 908 residues: Adhesion G-protein coupled receptor F1 (908 aa).

The N-terminal stretch at 1 to 20 (MRIGLLWLVPLFTLTEGTDG) is a signal peptide. The Extracellular segment spans residues 21–588 (FLQQKNDGRR…VVPVVKWITY (568 aa)). Residues Asn-133, Asn-167, Asn-328, Asn-353, Asn-367, Asn-388, Asn-422, Asn-453, Asn-510, Asn-519, Asn-526, and Asn-551 are each glycosylated (N-linked (GlcNAc...) asparagine). The SEA domain maps to 147–255 (ERAKVWGTFE…GSFRVFGKAP (109 aa)). In terms of domain architecture, GAIN-B spans 434-577 (PVTQIQSTRG…SMLMSPFVPS (144 aa)). 2 disulfide bridges follow: Cys-532-Cys-559 and Cys-547-Cys-561. The segment at 532 to 577 (CVFWDFSQLQWSNAGCQLVNETLDTVLCRCSHLTSFSMLMSPFVPS) is GPS. Residues 566–574 (SFSMLMSPF) form a stachel region. The chain crosses the membrane as a helical span at residues 589–609 (IGLSISIASLILCLIIESLFW). At 610 to 622 (KQTKRSQTSYTRN) the chain is on the cytoplasmic side. The chain crosses the membrane as a helical span at residues 623–643 (ICLVNIAVSLLIADVWFIIAA). At 644–658 (TVDPSVSPSGVCVAA) the chain is on the extracellular side. Cys-655 and Cys-731 form a disulfide bridge. A helical membrane pass occupies residues 659-679 (VFFTHFFYLAVFFWMLVLGIL). The Cytoplasmic segment spans residues 680-697 (LAYRIILVFHHMALTTMM). The helical transmembrane segment at 698 to 718 (AIGFCLGYGCPLLISIITLAV) threads the bilayer. Topologically, residues 719 to 742 (TQPSNSYKRNDVCWLNWSDKSKPL) are extracellular. Asn-734 is a glycosylation site (N-linked (GlcNAc...) asparagine). A helical membrane pass occupies residues 743–763 (LAFVVPALTIVAVNLVVVLLV). The Cytoplasmic portion of the chain corresponds to 764–789 (LRKLWRPAVGERLNQDDKATAIRMGK). A helical membrane pass occupies residues 790–810 (SLLVLTPLLGLTWGFGIGTMA). Over 811–818 (NSHNLAWH) the chain is Extracellular. A helical membrane pass occupies residues 819 to 839 (VLFALLNAFQGFFIFCFGILL). The Cytoplasmic portion of the chain corresponds to 840–908 (DTKLRQLLSN…ITLTQFLSTE (69 aa)).

It belongs to the G-protein coupled receptor 2 family. Adhesion G-protein coupled receptor (ADGR) subfamily. Heterodimer of 2 chains generated by proteolytic processing; the large extracellular N-terminal fragment and the membrane-bound C-terminal fragment predominantly remain associated and non-covalently linked. Autoproteolytically processed at the GPS region of the GAIN-B domain; this cleavage modulates receptor activity. As to expression, expressed in liver, kidney and adrenal gland. In kidney strong expression in the renal pelvis and the ureter.

It localises to the cell membrane. With respect to regulation, forms a heterodimer of 2 chains generated by proteolytic processing that remain associated through non-covalent interactions mediated by the GAIN-B domain. In the inactivated receptor, the Stachel sequence (also named stalk) is embedded in the GAIN-B domain, where it adopts a beta-strand conformation. On activation, the Stachel moves into the 7 transmembrane region and adopts a twisted hook-shaped configuration that forms contacts within the receptor, leading to coupling of a G-alpha protein, which activates signaling. The cleaved GAIN-B and N-terminal domains can then dissociate from the rest of the receptor. Its function is as follows. Adhesion G-protein coupled receptor (aGPCR) for N-docosahexaenoylethanolamine (synaptamide), an omega-3 fatty acid lipid highly enriched in the brain. Ligand binding causes a conformation change that triggers signaling via guanine nucleotide-binding proteins (G proteins) and modulates the activity of downstream effectors, such as adenylate cyclase. ADGRF1 is coupled to G(s) G proteins and mediates activation of adenylate cyclase activity. Also able to couple to G(q), G(i) and G(12)/G(13) G proteins; additional evidence is however required to confirm this result in vivo. Involved in the development of neurons and cognitive function. In liver, involved in fat accumulation. The polypeptide is Adhesion G-protein coupled receptor F1 (Mus musculus (Mouse)).